The sequence spans 393 residues: Cysteine protease ATG4B (393 aa).

Met1 carries the post-translational modification N-acetylmethionine. Ser34 is modified (phosphoserine). Cys74 (nucleophile) is an active-site residue. Cys189 carries the post-translational modification S-nitrosocysteine. Residues Asp278 and His280 contribute to the active site. S-nitrosocysteine occurs at positions 292 and 301. Cys292 and Cys361 form a disulfide bridge. 2 positions are modified to phosphoserine: Ser316 and Ser383. The LIR signature appears at 388–391 (FEIL). Residue Ser392 is modified to Phosphoserine.

Belongs to the peptidase C54 family. As to quaternary structure, interacts with PFKP; promoting phosphorylation of ATG4B at Ser-34. Interacts with GBP7. Phosphorylation at Ser-383 and Ser-392 promotes autophagy by increasing protein delipidation activity without affecting proteolytic activation of ATG8 proteins. Phosphorylation at Ser-316 by ULK1 inhibits autophagy by decreasing both proteolytic activation and delipidation activities. Phosphorylation at Ser-316 is dephosphorylated by protein phosphatase 2A (PP2A). Phosphorylation at Ser-34 by AKT2 promotes its hydrolase activity, leading to increased proteolytic activation and delipidation of ATG8 family proteins. Phosphorylation at Ser-34 by AKT1 promotes mitochondrial localization and inhibition of the F1F0-ATP synthase activity, leading to elevation of mitochondrial reactive oxygen species (ROS). In terms of processing, ubiquitinated by RNF5, leading to its degradation by the proteasome. Post-translationally, S-nitrosylation at Cys-189 and Cys-292 in response to high glucose decreases both proteolytic activation and delipidation activities. O-glycosylated by OGT, leading to increase protease activity, thereby promoting the proteolytic activation of ATG8 family proteins. In terms of processing, forms reversible intrachain disulfide bonds in response to oxidative stress. Forms interchain disulfide bonds, leading to formation of homooligomers in response to oxidation.

The protein localises to the cytoplasm. The protein resides in the cytosol. It localises to the cytoplasmic vesicle. Its subcellular location is the autophagosome. It is found in the endoplasmic reticulum. The protein localises to the mitochondrion. It catalyses the reaction [protein]-C-terminal L-amino acid-glycyl-phosphatidylethanolamide + H2O = [protein]-C-terminal L-amino acid-glycine + a 1,2-diacyl-sn-glycero-3-phosphoethanolamine. The catalysed reaction is [protein]-C-terminal L-amino acid-glycyl-phosphatidylserine + H2O = [protein]-C-terminal L-amino acid-glycine + a 1,2-diacyl-sn-glycero-3-phospho-L-serine. With respect to regulation, inhibited by N-ethylmaleimide. Redox-regulated during autophagy since reducing conditions activate ATG4A whereas an oxidizing environment such as the presence of H(2)O(2) inhibits its activity. The cysteine protease activity compounds is inhibited by styrylquinoline compounds 4-28 and LV-320. Cysteine protease that plays a key role in autophagy by mediating both proteolytic activation and delipidation of ATG8 family proteins. Required for canonical autophagy (macroautophagy), non-canonical autophagy as well as for mitophagy. The protease activity is required for proteolytic activation of ATG8 family proteins: cleaves the C-terminal amino acid of ATG8 proteins MAP1LC3A, MAP1LC3B, MAP1LC3C, GABARAPL1, GABARAPL2 and GABARAP, to reveal a C-terminal glycine. Exposure of the glycine at the C-terminus is essential for ATG8 proteins conjugation to phosphatidylethanolamine (PE) and insertion to membranes, which is necessary for autophagy. Protease activity is also required to counteract formation of high-molecular weight conjugates of ATG8 proteins (ATG8ylation): acts as a deubiquitinating-like enzyme that removes ATG8 conjugated to other proteins, such as ATG3. In addition to the protease activity, also mediates delipidation of ATG8 family proteins. Catalyzes delipidation of PE-conjugated forms of ATG8 proteins during macroautophagy. Also involved in non-canonical autophagy, a parallel pathway involving conjugation of ATG8 proteins to single membranes at endolysosomal compartments, by catalyzing delipidation of ATG8 proteins conjugated to phosphatidylserine (PS). Compared to other members of the family (ATG4A, ATG4C or ATG4C), constitutes the major protein for proteolytic activation of ATG8 proteins, while it displays weaker delipidation activity than other ATG4 paralogs. Involved in phagophore growth during mitophagy independently of its protease activity and of ATG8 proteins: acts by regulating ATG9A trafficking to mitochondria and promoting phagophore-endoplasmic reticulum contacts during the lipid transfer phase of mitophagy. Its function is as follows. (Microbial infection) Mediates cleavage of an ATG8 protein homolog coded in the genome of cytopathogenic bovine viral diarrhea virus (BVDV). This Bos taurus (Bovine) protein is Cysteine protease ATG4B (ATG4B).